We begin with the raw amino-acid sequence, 446 residues long: MGSEIPDYYNKTLASENNTVATRNSGFPVWEDYKGSVDDLQYFLIGLYTFVSLLGFMGNLLILMAVMRKRNQKTTVNFLIGNLAFSDILVVLFCSPFTLTSVLLDQWMFGKVMCHIMPFLQCVTVLVSTLILISIAIVRYHMIKHPVSNNLTANHGYFLIATVWTLGLAICSPLPVFHSLVELQESFGSAWLSSRYLCVESWPSDSYRIAFTISLLLVQYILPLVCLTVSHTSVCRTISCGLSSQDSKLEENEMINLTLQPAKRSGPQAKLSHHPKWTYSFIRRHRRRYSKKTACVRPAPAGPALESREGRPPGKVGSMQSQPPPSNKFMPGVPTCFEVKPEENSDVPEMRVSRSIMRLRKRSRSVFYRLTVLILVFAVSWMPLHLFHVVTDFNDNLISNRHFKLVYCICHLLGMMSCCLNPILYGFLNNGIKADLMSLIHCLHVS.

Residues 1–42 are Extracellular-facing; it reads MGSEIPDYYNKTLASENNTVATRNSGFPVWEDYKGSVDDLQY. 2 N-linked (GlcNAc...) asparagine glycosylation sites follow: N10 and N17. The chain crosses the membrane as a helical span at residues 43-63; sequence FLIGLYTFVSLLGFMGNLLIL. Residues 64-77 are Cytoplasmic-facing; sequence MAVMRKRNQKTTVN. The helical transmembrane segment at 78–98 threads the bilayer; sequence FLIGNLAFSDILVVLFCSPFT. Topologically, residues 99-117 are extracellular; that stretch reads LTSVLLDQWMFGKVMCHIM. C114 and C198 are oxidised to a cystine. Residues 118 to 138 traverse the membrane as a helical segment; sequence PFLQCVTVLVSTLILISIAIV. The Cytoplasmic portion of the chain corresponds to 139-156; it reads RYHMIKHPVSNNLTANHG. Residues 157–177 form a helical membrane-spanning segment; that stretch reads YFLIATVWTLGLAICSPLPVF. Over 178–208 the chain is Extracellular; that stretch reads HSLVELQESFGSAWLSSRYLCVESWPSDSYR. A helical membrane pass occupies residues 209–229; sequence IAFTISLLLVQYILPLVCLTV. The Cytoplasmic portion of the chain corresponds to 230 to 369; the sequence is SHTSVCRTIS…RKRSRSVFYR (140 aa). The interval 297–325 is disordered; sequence RPAPAGPALESREGRPPGKVGSMQSQPPP. The helical transmembrane segment at 370 to 390 threads the bilayer; that stretch reads LTVLILVFAVSWMPLHLFHVV. Residues 391-407 lie on the Extracellular side of the membrane; the sequence is TDFNDNLISNRHFKLVY. Residues 408–428 traverse the membrane as a helical segment; that stretch reads CICHLLGMMSCCLNPILYGFL. Over 429-446 the chain is Cytoplasmic; that stretch reads NNGIKADLMSLIHCLHVS. Residue C442 is the site of S-palmitoyl cysteine attachment.

It belongs to the G-protein coupled receptor 1 family.

Its subcellular location is the cell membrane. In terms of biological role, receptor for neuropeptide Y and peptide YY. The activity of this receptor is mediated by G proteins that inhibit adenylate cyclase activity. Seems to be associated with food intake. Could be involved in feeding disorders. This Sus scrofa (Pig) protein is Neuropeptide Y receptor type 5 (NPY5R).